The sequence spans 941 residues: Isoleucine--tRNA ligase (941 aa).

The 'HIGH' region motif lies at 59–69 (PYANGNIHIGH). L-isoleucyl-5'-AMP is bound at residue E562. A 'KMSKS' region motif is present at residues 603 to 607 (KMSKS). K606 is a binding site for ATP. Zn(2+)-binding residues include C904, C907, C924, and C927.

This sequence belongs to the class-I aminoacyl-tRNA synthetase family. IleS type 1 subfamily. In terms of assembly, monomer. It depends on Zn(2+) as a cofactor.

It is found in the cytoplasm. The catalysed reaction is tRNA(Ile) + L-isoleucine + ATP = L-isoleucyl-tRNA(Ile) + AMP + diphosphate. In terms of biological role, catalyzes the attachment of isoleucine to tRNA(Ile). As IleRS can inadvertently accommodate and process structurally similar amino acids such as valine, to avoid such errors it has two additional distinct tRNA(Ile)-dependent editing activities. One activity is designated as 'pretransfer' editing and involves the hydrolysis of activated Val-AMP. The other activity is designated 'posttransfer' editing and involves deacylation of mischarged Val-tRNA(Ile). The sequence is that of Isoleucine--tRNA ligase from Haemophilus influenzae (strain PittGG).